Consider the following 116-residue polypeptide: UPF0102 protein Neut_1662 (116 aa).

Belongs to the UPF0102 family.

In Nitrosomonas eutropha (strain DSM 101675 / C91 / Nm57), this protein is UPF0102 protein Neut_1662.